Here is a 309-residue protein sequence, read N- to C-terminus: Glutaminase (309 aa).

Substrate is bound by residues Ser64, Asn114, Glu160, Asn167, Tyr191, Tyr243, and Val261.

Belongs to the glutaminase family. In terms of assembly, homotetramer.

The enzyme catalyses L-glutamine + H2O = L-glutamate + NH4(+). This Methylorubrum populi (strain ATCC BAA-705 / NCIMB 13946 / BJ001) (Methylobacterium populi) protein is Glutaminase.